An 88-amino-acid polypeptide reads, in one-letter code: MAEAEKTVRTLTGRVVSDKMDKTITVLIERRVKHPIYGKYVKRSTKLHAHDESNQCKIGDKVSIRETRPLAKTKSWALVEVLERAVEV.

It belongs to the universal ribosomal protein uS17 family. In terms of assembly, part of the 30S ribosomal subunit.

One of the primary rRNA binding proteins, it binds specifically to the 5'-end of 16S ribosomal RNA. The chain is Small ribosomal subunit protein uS17 from Pseudomonas entomophila (strain L48).